We begin with the raw amino-acid sequence, 221 residues long: PKHD-type hydroxylase P9515_13321 (221 aa).

The Fe2OG dioxygenase domain occupies 80–174; sequence TIHGIMFTKS…RLVCVGWIES (95 aa). Fe cation-binding residues include His-98, Asp-100, and His-155. Arg-165 serves as a coordination point for 2-oxoglutarate.

It depends on Fe(2+) as a cofactor. L-ascorbate is required as a cofactor.

This is PKHD-type hydroxylase P9515_13321 from Prochlorococcus marinus (strain MIT 9515).